The sequence spans 683 residues: Protein kinase C eta type (683 aa).

Positions 1–118 constitute a C2 domain; it reads MSSGTMKFNG…LRTAGTSDTF (118 aa). Residues Ser-28 and Ser-32 each carry the phosphoserine modification. 2 Phorbol-ester/DAG-type zinc fingers span residues 171-222 and 245-295; these read GHKF…VTAC and PHKF…APNC. Ser-317 carries the post-translational modification Phosphoserine. In terms of domain architecture, Protein kinase spans 355 to 614; sequence FEFIRVLGKG…EHEILRHPFF (260 aa). ATP contacts are provided by residues 361 to 369 and Lys-384; that span reads LGKGSFGKV. Asp-479 serves as the catalytic Proton acceptor. Thr-513 is subject to Phosphothreonine; by PDPK1. The region spanning 615-683 is the AGC-kinase C-terminal domain; that stretch reads KEIDWVQLNH…FSYVSPELQP (69 aa). Thr-656 carries the post-translational modification Phosphothreonine. Position 675 is a phosphoserine (Ser-675).

Belongs to the protein kinase superfamily. AGC Ser/Thr protein kinase family. PKC subfamily. As to quaternary structure, interacts with FYN. Interacts with RALA. Interacts with DGKQ.

The protein resides in the cytoplasm. The catalysed reaction is L-seryl-[protein] + ATP = O-phospho-L-seryl-[protein] + ADP + H(+). It carries out the reaction L-threonyl-[protein] + ATP = O-phospho-L-threonyl-[protein] + ADP + H(+). Novel PKCs (PRKCD, PRKCE, PRKCH and PRKCQ) are calcium-insensitive, but activated by diacylglycerol (DAG) and phosphatidylserine. Three specific sites; Thr-513 (activation loop of the kinase domain), Thr-656 (turn motif) and Ser-675 (hydrophobic region), need to be phosphorylated for its full activation. In terms of biological role, calcium-independent, phospholipid- and diacylglycerol (DAG)-dependent serine/threonine-protein kinase that is involved in the regulation of cell differentiation in keratinocytes and pre-B cell receptor, mediates regulation of epithelial tight junction integrity and foam cell formation, and is required for glioblastoma proliferation and apoptosis prevention in MCF-7 cells. In keratinocytes, binds and activates the tyrosine kinase FYN, which in turn blocks epidermal growth factor receptor (EGFR) signaling and leads to keratinocyte growth arrest and differentiation. Associates with the cyclin CCNE1-CDK2-CDKN1B complex and inhibits CDK2 kinase activity, leading to RB1 dephosphorylation and thereby G1 arrest in keratinocytes. In association with RALA activates actin depolymerization, which is necessary for keratinocyte differentiation. In the pre-B cell receptor signaling, functions downstream of BLNK by up-regulating IRF4, which in turn activates L chain gene rearrangement. Regulates epithelial tight junctions (TJs) by phosphorylating occludin (OCLN) on threonine residues, which is necessary for the assembly and maintenance of TJs. In association with PLD2 and via TLR4 signaling, is involved in lipopolysaccharide (LPS)-induced RGS2 down-regulation and foam cell formation. Upon PMA stimulation, mediates glioblastoma cell proliferation by activating the mTOR pathway, the PI3K/AKT pathway and the ERK1-dependent phosphorylation of ELK1. Involved in the protection of glioblastoma cells from irradiation-induced apoptosis by preventing caspase-9 activation. In camptothecin-treated MCF-7 cells, regulates NF-kappa-B upstream signaling by activating IKBKB, and confers protection against DNA damage-induced apoptosis. Promotes oncogenic functions of ATF2 in the nucleus while blocking its apoptotic function at mitochondria. Phosphorylates ATF2 which promotes its nuclear retention and transcriptional activity and negatively regulates its mitochondrial localization. The sequence is that of Protein kinase C eta type (Prkch) from Rattus norvegicus (Rat).